The primary structure comprises 469 residues: RuvB-like helicase 2 (469 aa).

An ATP-binding site is contributed by glycine 74 to threonine 81.

It belongs to the RuvB family. In terms of assembly, may form heterododecamers with RVB1. Component of the SWR1 chromatin remodeling complex, the INO80 chromatin remodeling complex, and of the R2TP complex.

It localises to the nucleus. It catalyses the reaction ATP + H2O = ADP + phosphate + H(+). Functionally, DNA helicase which participates in several chromatin remodeling complexes, including the SWR1 and the INO80 complexes. The SWR1 complex mediates the ATP-dependent exchange of histone H2A for the H2A variant HZT1 leading to transcriptional regulation of selected genes by chromatin remodeling. The INO80 complex remodels chromatin by shifting nucleosomes and is involved in DNA repair. Also involved in pre-rRNA processing. This chain is RuvB-like helicase 2 (RVB2), found in Eremothecium gossypii (strain ATCC 10895 / CBS 109.51 / FGSC 9923 / NRRL Y-1056) (Yeast).